A 500-amino-acid polypeptide reads, in one-letter code: NAD(P)H-quinone oxidoreductase chain 4, chloroplastic (500 aa).

14 helical membrane passes run 4-24 (FPWL…LFFL), 31-51 (LIKW…TYAF), 87-107 (IGPI…AWPV), 113-130 (LFHF…GSFS), 134-154 (LLLF…LLSM), 167-187 (FILY…GLGL), 208-228 (ALEI…SPII), 242-262 (HYST…YGLV), 272-292 (AHSI…IYAA), 305-325 (IAYS…SITD), 330-350 (GAIL…FLAG), 386-406 (LALP…GIIT), 416-436 (ILIT…SLSM), and 462-482 (LFVS…PDFV).

It belongs to the complex I subunit 4 family.

It localises to the plastid. The protein localises to the chloroplast thylakoid membrane. The enzyme catalyses a plastoquinone + NADH + (n+1) H(+)(in) = a plastoquinol + NAD(+) + n H(+)(out). It catalyses the reaction a plastoquinone + NADPH + (n+1) H(+)(in) = a plastoquinol + NADP(+) + n H(+)(out). This Gossypium barbadense (Sea Island cotton) protein is NAD(P)H-quinone oxidoreductase chain 4, chloroplastic.